The sequence spans 784 residues: Toll-like receptor 2 (784 aa).

Positions 1 to 20 are cleaved as a signal peptide; the sequence is MPHALWTVWVLGAVISLSKE. Residues 21-587 lie on the Extracellular side of the membrane; sequence GVPDQPSSLS…THLSVSECHR (567 aa). Cys-31 and Cys-37 form a disulfide bridge. LRR repeat units follow at residues 54-77, 78-101, 102-125, 126-150, 151-175, 176-199, 200-223, 224-250, 251-278, 279-308, 309-337, 338-361, 362-388, 389-414, 415-437, 438-457, 458-478, 479-500, and 501-524; these read AVKSLDLSNNKIASVGNSDLWKCV, NLKALRLGSNDINTIEEDSFSSLR, SLEHLDLSNNHLSNLSSSWFRPLS, SLKFLNLLGSTYKTLGETSLFSHLT, NLRILKVGNIHFTEIQGKDFAGLTF, LEELEIDATNLQRYEPKSFKSIQN, ISHLILRMKQPVLLPEIILDTLSS, LEYLELRDTYLNTFHFAEVSDPETNTL, IKKFTFRNVKITDESFDEIVKLLNYISG, VSEAEFDECTLDGLGEFRTPDIDKIKVIGK, LETLTIRRLRIPQFYLFRDLSSIYSLTER, VKRITIENSKVFLVPCSLSRHLKS, LEYLDLSDNLMVEEYLKNSACERAWPS, LQTLILRQNHLTSLGKTGETLLTLKN, LTKLDISKNSFHSMPETCQWPEK, MKYLNLSSIRIDRLTQCIPQ, TLEVLDISNNNLNSFSLILPQ, VKELYISRNKLKTLPDASFLPM, and LLVMRISRKTINTFSKEQLDSFQK. Residue Asn-115 is glycosylated (N-linked (GlcNAc...) asparagine). A glycan (N-linked (GlcNAc...) asparagine) is linked at Asn-199. Cysteines 353 and 382 form a disulfide. Asn-414 is a glycosylation site (N-linked (GlcNAc...) asparagine). Cys-432 and Cys-454 are disulfide-bonded. Asn-442 carries N-linked (GlcNAc...) asparagine glycosylation. The 55-residue stretch at 525 to 579 folds into the LRRCT domain; the sequence is LKTLEAGGNNFICSCEFLSFTQEEQALDQILIDWPENYLCDSPSHVRGQRVQDTH. A helical transmembrane segment spans residues 588–608; that stretch reads TALVSAVCCALFLSILLTGVL. Residues 609–784 lie on the Cytoplasmic side of the membrane; sequence CHHFHGLWYM…WLNLRAAIKS (176 aa). Residues 639–782 form the TIR domain; that stretch reads ICYDAFVSYS…GFWLNLRAAI (144 aa). Residue Lys-754 forms a Glycyl lysine isopeptide (Lys-Gly) (interchain with G-Cter in ubiquitin) linkage. Positions 761 to 778 match the ATG16L1-binding motif motif; that stretch reads YLEWPTDEAQQEGFWLNL.

Belongs to the Toll-like receptor family. Interacts with LY96, TLR1 and TLR6 (via extracellular domain). TLR2 seems to exist in heterodimers with either TLR1 or TLR6 before stimulation by the ligand. The heterodimers form bigger oligomers in response to their corresponding ligands as well as further heterotypic associations with other receptors such as CD14 and/or CD36. Binds MYD88 (via TIR domain). Interacts with TICAM1. Interacts with CNPY3. Interacts with ATG16L1. Interacts with PPP1R11. Interacts with TICAM2. Interacts with TIRAP. In terms of processing, ubiquitinated at Lys-754 by PPP1R11, leading to its degradation. Deubiquitinated by USP2. Glycosylation of Asn-442 is critical for secretion of the N-terminal ectodomain of TLR2.

The protein localises to the membrane. The protein resides in the cytoplasmic vesicle. It is found in the phagosome membrane. It localises to the membrane raft. Cooperates with LY96 to mediate the innate immune response to bacterial lipoproteins and other microbial cell wall components. Cooperates with TLR1 or TLR6 to mediate the innate immune response to bacterial lipoproteins or lipopeptides. Acts via MYD88 and TRAF6, leading to NF-kappa-B activation, cytokine secretion and the inflammatory response. May also promote apoptosis in response to lipoproteins. Forms activation clusters composed of several receptors depending on the ligand, these clusters trigger signaling from the cell surface and subsequently are targeted to the Golgi in a lipid-raft dependent pathway. Forms the cluster TLR2:TLR6:CD14:CD36 in response to diacylated lipopeptides and TLR2:TLR1:CD14 in response to triacylated lipopeptides. The sequence is that of Toll-like receptor 2 (TLR2) from Equus caballus (Horse).